Reading from the N-terminus, the 348-residue chain is MSQYKTGLLLIHPAVTTTPELVENTKAQAASKKVKFVDQFLINKLNDGSITLENAKYETVHYLTPEAQTDIKFPKKLISVLADSLKPNGSLIGLSDIYKVDALINGFEIINEPDYCWIKMDSSKLNQTVSIPLKKKKTNNTKLQSGSKLPTFKKASSSTSNLPSFKKADHSRQPIVKETDSFKPPSFKMATEPKVYRVVDDLIEDSDDDDFSSDSSKAQYFDQVDTSDDSIEEEELIDEDGSGKSMITMITCGKSKTKKKKACKDCTCGMKEQEGKEINDIRSQQDKVVKFTEDELTEIDFTIDGKKVGGCGSCSLGDAFRCSGCPYLGLPAFKPGQPINLDSISDDL.

The segment at 1–162 (MSQYKTGLLL…KKASSSTSNL (162 aa)) is N-terminal SAM-like domain. The interval 137–170 (KTNNTKLQSGSKLPTFKKASSSTSNLPSFKKADH) is disordered. A compositionally biased stretch (polar residues) spans 144–163 (QSGSKLPTFKKASSSTSNLP). Residues 163-242 (PSFKKADHSR…EEELIDEDGS (80 aa)) form a linker region. Ser-206 carries the phosphoserine modification. 4 residues coordinate [2Fe-2S] cluster: Cys-252, Cys-263, Cys-266, and Cys-268. Residues 252 to 268 (CGKSKTKKKKACKDCTC) form a fe-S binding site A region. [4Fe-4S] cluster-binding residues include Cys-311, Cys-314, Cys-322, and Cys-325. 2 consecutive short sequence motifs (cx2C motif) follow at residues 311–314 (CGSC) and 322–325 (CSGC). The segment at 311–325 (CGSCSLGDAFRCSGC) is fe-S binding site B.

Belongs to the anamorsin family. Monomer. Interacts with TAH18. Interacts with MIA40. [2Fe-2S] cluster is required as a cofactor. It depends on [4Fe-4S] cluster as a cofactor.

It is found in the cytoplasm. The protein resides in the mitochondrion intermembrane space. Functionally, component of the cytosolic iron-sulfur (Fe-S) protein assembly (CIA) machinery required for the maturation of extramitochondrial Fe-S proteins. Part of an electron transfer chain functioning in an early step of cytosolic Fe-S biogenesis, facilitating the de novo assembly of a [4Fe-4S] cluster on the scaffold complex CFD1-NBP35. Electrons are transferred to DRE2 from NADPH via the FAD- and FMN-containing protein TAH18. TAH18-DRE2 are also required for the assembly of the diferric tyrosyl radical cofactor of ribonucleotide reductase (RNR), probably by providing electrons for reduction during radical cofactor maturation in the catalytic small subunit RNR2. The polypeptide is Fe-S cluster assembly protein DRE2 (Saccharomyces cerevisiae (strain Lalvin EC1118 / Prise de mousse) (Baker's yeast)).